Here is a 357-residue protein sequence, read N- to C-terminus: Beta-hexosaminidase (357 aa).

Substrate contacts are provided by residues Asp72, Arg80, Arg146, and 176–177; that span reads KH. His189 functions as the Proton donor/acceptor in the catalytic mechanism. The active-site Nucleophile is Asp260.

This sequence belongs to the glycosyl hydrolase 3 family. NagZ subfamily.

It is found in the cytoplasm. The enzyme catalyses Hydrolysis of terminal non-reducing N-acetyl-D-hexosamine residues in N-acetyl-beta-D-hexosaminides.. The protein operates within cell wall biogenesis; peptidoglycan recycling. Its function is as follows. Plays a role in peptidoglycan recycling by cleaving the terminal beta-1,4-linked N-acetylglucosamine (GlcNAc) from peptide-linked peptidoglycan fragments, giving rise to free GlcNAc, anhydro-N-acetylmuramic acid and anhydro-N-acetylmuramic acid-linked peptides. The protein is Beta-hexosaminidase of Hydrogenovibrio crunogenus (strain DSM 25203 / XCL-2) (Thiomicrospira crunogena).